A 301-amino-acid polypeptide reads, in one-letter code: MTKKADPYGFAKDFLAGGISAAVSKTAVAPIERVKLLLQVQAASKQIAVDKQYKGIVDCFVRIPKEQGIGAFWRGNLANVIRYFPTQALNFAFKDVYKQVFLGGVDKNTQFWRYFLGNLGSGGAAGATSLCFVYPLDFARTRLGADVGRGAGEREFNGLLDCLKKTVKSDGIIGLYRGFNVSVQGIIIYRAAYFGCFDTAKGMLPDPKNTSIFVSWAIAQVVTTASGIISYPFDTVRRRMMMQSGRAKSEVMYKNTLDCWVKIGKQEGSGAFFKGAFSNVLRGTGGALVLVFYDEVKALLG.

Solcar repeat units lie at residues 8-100 (YGFA…YKQV), 113-203 (RYFL…AKGM), and 210-299 (TSIF…VKAL). The next 5 helical transmembrane spans lie at 10 to 39 (FAKD…LLLQ), 77 to 101 (LANV…KQVF), 112 to 132 (WRYF…SLCF), 181 to 201 (VSVQ…DTAK), and 213 to 233 (FVSW…SYPF). ADP is bound by residues Arg82 and Lys94. ADP is bound at residue Arg237. Residues 237-242 (RRRMMM) are important for transport activity. Positions 237 to 242 (RRRMMM) match the Nucleotide carrier signature motif motif. Residues 276–293 (AFSNVLRGTGGALVLVFY) form a helical membrane-spanning segment.

This sequence belongs to the mitochondrial carrier (TC 2.A.29) family. In terms of assembly, monomer.

It localises to the mitochondrion inner membrane. The enzyme catalyses ADP(in) + ATP(out) = ADP(out) + ATP(in). The matrix-open state (m-state) is inhibited by the membrane-permeable bongkrekic acid (BKA). The cytoplasmic-open state (c-state) is inhibited by the membrane-impermeable toxic inhibitor carboxyatractyloside (CATR). Functionally, ADP:ATP antiporter that mediates import of ADP into the mitochondrial matrix for ATP synthesis, and export of ATP out to fuel the cell. Cycles between the cytoplasmic-open state (c-state) and the matrix-open state (m-state): operates by the alternating access mechanism with a single substrate-binding site intermittently exposed to either the cytosolic (c-state) or matrix (m-state) side of the inner mitochondrial membrane. The chain is ADP,ATP carrier protein 1 from Anopheles gambiae (African malaria mosquito).